Consider the following 573-residue polypeptide: Proline--tRNA ligase (573 aa).

This sequence belongs to the class-II aminoacyl-tRNA synthetase family. ProS type 1 subfamily. As to quaternary structure, homodimer.

The protein resides in the cytoplasm. The enzyme catalyses tRNA(Pro) + L-proline + ATP = L-prolyl-tRNA(Pro) + AMP + diphosphate. Its function is as follows. Catalyzes the attachment of proline to tRNA(Pro) in a two-step reaction: proline is first activated by ATP to form Pro-AMP and then transferred to the acceptor end of tRNA(Pro). As ProRS can inadvertently accommodate and process non-cognate amino acids such as alanine and cysteine, to avoid such errors it has two additional distinct editing activities against alanine. One activity is designated as 'pretransfer' editing and involves the tRNA(Pro)-independent hydrolysis of activated Ala-AMP. The other activity is designated 'posttransfer' editing and involves deacylation of mischarged Ala-tRNA(Pro). The misacylated Cys-tRNA(Pro) is not edited by ProRS. This chain is Proline--tRNA ligase, found in Chromohalobacter salexigens (strain ATCC BAA-138 / DSM 3043 / CIP 106854 / NCIMB 13768 / 1H11).